The chain runs to 131 residues: uncharacterized protein (131 aa).

This is an uncharacterized protein from Staphylococcus aureus.